A 591-amino-acid polypeptide reads, in one-letter code: Aspartate--tRNA(Asp/Asn) ligase (591 aa).

Glu174 contributes to the L-aspartate binding site. The aspartate stretch occupies residues 198 to 201; sequence QLFK. Arg220 is an L-aspartate binding site. ATP is bound by residues 220–222 and Gln229; that span reads RDE. His450 lines the L-aspartate pocket. Residue Glu483 participates in ATP binding. Arg490 provides a ligand contact to L-aspartate. 535-538 is an ATP binding site; the sequence is GLDR.

This sequence belongs to the class-II aminoacyl-tRNA synthetase family. Type 1 subfamily. In terms of assembly, homodimer.

Its subcellular location is the cytoplasm. The catalysed reaction is tRNA(Asx) + L-aspartate + ATP = L-aspartyl-tRNA(Asx) + AMP + diphosphate. Its function is as follows. Aspartyl-tRNA synthetase with relaxed tRNA specificity since it is able to aspartylate not only its cognate tRNA(Asp) but also tRNA(Asn). Reaction proceeds in two steps: L-aspartate is first activated by ATP to form Asp-AMP and then transferred to the acceptor end of tRNA(Asp/Asn). The sequence is that of Aspartate--tRNA(Asp/Asn) ligase from Azotobacter vinelandii (strain DJ / ATCC BAA-1303).